Here is a 61-residue protein sequence, read N- to C-terminus: Large ribosomal subunit protein uL30 (61 aa).

This sequence belongs to the universal ribosomal protein uL30 family. As to quaternary structure, part of the 50S ribosomal subunit.

The sequence is that of Large ribosomal subunit protein uL30 from Fervidobacterium nodosum (strain ATCC 35602 / DSM 5306 / Rt17-B1).